We begin with the raw amino-acid sequence, 473 residues long: Nuclear distribution protein PAC1 (473 aa).

The LisH domain maps to Q9–V41. Residues T60–T87 are a coiled coil. A compositionally biased stretch (polar residues) spans Q80–R93. Residues Q80 to V99 form a disordered region. 8 WD repeats span residues S113 to K154, H156 to R196, G200 to T247, G250 to T289, G292 to L352, G354 to R393, D397 to G434, and V435 to A472.

This sequence belongs to the WD repeat LIS1/nudF family. In terms of assembly, self-associates. Interacts with NDL1 and dynein.

It is found in the cytoplasm. The protein localises to the cytoskeleton. The protein resides in the spindle pole. Positively regulates the activity of the minus-end directed microtubule motor protein dynein. May enhance dynein-mediated microtubule sliding by targeting dynein to the microtubule plus end. Required for nuclear migration during vegetative growth as well as development. Required for retrograde early endosome (EE) transport from the hyphal tip. Required for localization of dynein to the mitotic spindle poles. Recruits additional proteins to the dynein complex at SPBs. This Ajellomyces dermatitidis (strain ER-3 / ATCC MYA-2586) (Blastomyces dermatitidis) protein is Nuclear distribution protein PAC1.